The primary structure comprises 134 residues: Small ribosomal subunit protein uS9c (134 aa).

The tract at residues 105–134 is disordered; that stretch reads QGYLTRNPLRKERKKYGLKKARKAPQFSKR. The span at 115 to 134 shows a compositional bias: basic residues; it reads KERKKYGLKKARKAPQFSKR.

This sequence belongs to the universal ribosomal protein uS9 family.

Its subcellular location is the plastid. It is found in the chloroplast. This Nephroselmis olivacea (Green alga) protein is Small ribosomal subunit protein uS9c (rps9).